The chain runs to 112 residues: Large ribosomal subunit protein uL22 (112 aa).

The protein belongs to the universal ribosomal protein uL22 family. As to quaternary structure, part of the 50S ribosomal subunit.

Its function is as follows. This protein binds specifically to 23S rRNA; its binding is stimulated by other ribosomal proteins, e.g. L4, L17, and L20. It is important during the early stages of 50S assembly. It makes multiple contacts with different domains of the 23S rRNA in the assembled 50S subunit and ribosome. Functionally, the globular domain of the protein is located near the polypeptide exit tunnel on the outside of the subunit, while an extended beta-hairpin is found that lines the wall of the exit tunnel in the center of the 70S ribosome. This chain is Large ribosomal subunit protein uL22, found in Desulfovibrio desulfuricans (strain ATCC 27774 / DSM 6949 / MB).